A 449-amino-acid polypeptide reads, in one-letter code: TNF receptor-associated factor family protein DDB_G0272340 (449 aa).

The segment at 33-76 (CPICEECIMDVNKCEALQCKEGHVHCRLCWMKSLESKKECMTCR) adopts an RING-type; degenerate zinc-finger fold. 2 TRAF-type zinc fingers span residues 133–187 (GHIK…IDDS) and 189–251 (VHYS…SELS). Residues 263-309 (MEATIDQHICKFEKSEKEYKKLELEYNRLKDDFKILQSELKVIRELK) adopt a coiled-coil conformation. An MATH domain is found at 311–437 (NYQNKWVITN…QNSVTLNINI (127 aa)).

It belongs to the TNF receptor-associated factor family. A subfamily.

It is found in the cytoplasm. Functionally, probable adapter protein and signal transducer that links members of the tumor necrosis factor receptor family to different signaling pathways by association with the receptor cytoplasmic domain and kinases. The polypeptide is TNF receptor-associated factor family protein DDB_G0272340 (Dictyostelium discoideum (Social amoeba)).